The chain runs to 354 residues: Malate dehydrogenase 2, peroxisomal (354 aa).

A peroxisomal targeting signal PTS2 region spans residues 10-18; the sequence is RIARISAHL. NAD(+) is bound by residues 49–55 and D75; that span reads GAAGGIG. Substrate-binding residues include R122 and R128. NAD(+) contacts are provided by residues N135 and 158–160; that span reads ISN. Positions 160 and 194 each coordinate substrate. H218 functions as the Proton acceptor in the catalytic mechanism. NAD(+) is bound at residue M269.

Belongs to the LDH/MDH superfamily. MDH type 1 family. As to quaternary structure, homodimer. Expressed in rosette leaves.

Its subcellular location is the peroxisome. The enzyme catalyses (S)-malate + NAD(+) = oxaloacetate + NADH + H(+). Functionally, catalyzes a reversible NAD-dependent dehydrogenase reaction involved in central metabolism and redox homeostasis between organelle compartments. Peroxisomal NAD-dependent malate dehydrogenase involved in fatty acid beta-oxidation. Reoxidizes NADH from the beta-oxidation and provides NAD for the conversion of fatty acyl-CoA to acetyl-CoA. Does not participate directly in the glyoxylate cycle. Required for maintenance of photosynthetic rates under photorespiratory conditions, and carbon flow during photorespiration. Supplies NADH reductant to the peroxisomal hydroxypyruvate reductase (HPR), which reduces hydroxypyruvate into glycerate in the photorespiratory cycle. This Arabidopsis thaliana (Mouse-ear cress) protein is Malate dehydrogenase 2, peroxisomal.